Reading from the N-terminus, the 343-residue chain is MGARVAVAGASGYSGGELLRLIAAHPELELAVATAASHAGQPIGAVHPHLVDLADQVFAPTDPAVLGDADVVFLALPHGQSAAIAATLPESALVVDIGADFRLRDPAAWAKFYGGTHAGTWTYGLPELPGARAEIAKSRRIANPGCYVTAATLALAPLFAAHLVDPDDVVIVAASGTSGAGRSLKPNLLASEVMGSLAAYKVGGVHQHTPEIEQNLSQAAGEPVTVSFTPILAPLPRGILATCTARPKAGVDGDAIRAALANAYHDEPFVHLLPPDVWPQTAATLGSNSVHLQAAFDEAARRVVVVAALDNLTKGAAGQAIQNANIALGFPETTGLTRSGVAP.

Residue Cys146 is part of the active site.

This sequence belongs to the NAGSA dehydrogenase family. Type 1 subfamily.

Its subcellular location is the cytoplasm. It carries out the reaction N-acetyl-L-glutamate 5-semialdehyde + phosphate + NADP(+) = N-acetyl-L-glutamyl 5-phosphate + NADPH + H(+). It participates in amino-acid biosynthesis; L-arginine biosynthesis; N(2)-acetyl-L-ornithine from L-glutamate: step 3/4. Catalyzes the NADPH-dependent reduction of N-acetyl-5-glutamyl phosphate to yield N-acetyl-L-glutamate 5-semialdehyde. This chain is N-acetyl-gamma-glutamyl-phosphate reductase, found in Acidothermus cellulolyticus (strain ATCC 43068 / DSM 8971 / 11B).